The primary structure comprises 60 residues: Light-harvesting protein B-800/850 alpha chain (60 aa).

Residues 1-14 (MNNAKIWTVVKPST) are Cytoplasmic-facing. A helical membrane pass occupies residues 15–35 (GIPLILGAVAVAALIVHAGLL). His-31 is an a bacteriochlorophyll binding site. At 36 to 60 (TNTTWFANYWNGNPMATVVAVAPAQ) the chain is on the periplasmic side.

Belongs to the antenna complex alpha subunit family. In terms of assembly, the core complex is formed by different alpha and beta chains, binding bacteriochlorophyll molecules, and arranged most probably in tetrameric structures disposed around the reaction center. The non-pigmented gamma chains may constitute additional components.

It is found in the cell inner membrane. Its function is as follows. Antenna complexes are light-harvesting systems, which transfer the excitation energy to the reaction centers. This chain is Light-harvesting protein B-800/850 alpha chain (pucA), found in Rhodobacter capsulatus (Rhodopseudomonas capsulata).